The primary structure comprises 604 residues: Protein CBFA2T2 (604 aa).

The disordered stretch occupies residues 25–105 (KRVPAMPGSP…SSTSSALTNQ (81 aa)). At S33 the chain carries Phosphoserine. A Glycyl lysine isopeptide (Lys-Gly) (interchain with G-Cter in SUMO2) cross-link involves residue K38. A compositionally biased stretch (pro residues) spans 46–59 (PTMPPLPPINPGGP). Composition is skewed to polar residues over residues 64 to 79 (FTPT…SPPT) and 88 to 105 (QRFS…LTNQ). The tract at residues 107–215 (LPATCGARQL…QHEHLLLNTS (109 aa)) is interaction with PRDM14. The 96-residue stretch at 113 to 208 (ARQLSKLKRF…TPSQYLAQHE (96 aa)) folds into the TAFH domain. Residues 229 to 265 (VHGNGKRPSPERREENSFDRDTIAPEPPAKRVCTISP) are disordered. The span at 236-251 (PSPERREENSFDRDTI) shows a compositional bias: basic and acidic residues. S264 is subject to Phosphoserine. Positions 331-377 (QDELVDHRLTEREWADEWKHLDHALNCIMEMVEKTRRSMAVLRRCQE) are nervy homology region 2 (NHR2). The disordered stretch occupies residues 397–427 (RKTGTELVSRQHSPGSADSLSNDSQREFNSR). The span at 402–419 (ELVSRQHSPGSADSLSND) shows a compositional bias: polar residues. The residue at position 409 (S409) is a Phosphoserine. Residues 435–484 (VEFWKKTEEAVNKVKIQAMSEVQKAVAEAEQKAFEVIATERARMEQTIAD) form a nervy homology region 3 (NHR3) region. Residue K449 forms a Glycyl lysine isopeptide (Lys-Gly) (interchain with G-Cter in SUMO2) linkage. The stretch at 451–491 (QAMSEVQKAVAEAEQKAFEVIATERARMEQTIADVKRQAAE) forms a coiled coil. Zn(2+) is bound by residues C507, C510, C518, C521, C527, C531, H539, and C543. An MYND-type zinc finger spans residues 507–543 (CWNCGRKASETCSGCNIARYCGSFCQHKDWERHHRLC). The tract at residues 547-604 (LHGQSPHGQGRPLLPVGRGSSARSADCSVPSPALDKTSATTSRSSTPASVTAIDTNGL) is disordered. At S577 the chain carries Phosphoserine. A compositionally biased stretch (low complexity) spans 583–598 (TSATTSRSSTPASVTA).

This sequence belongs to the CBFA2T family. In terms of assembly, homooligomer. Homotetramerization is mediated by nervy homology region 2. Can interact with RUNX1T1/CBFA2T1 and CBFA2T3/MTG16; heterotetramerization between members of the CBFA2T family is proposed. Forms a heterooligomer with the AML1-MTG8/ETO fusion protein. Interacts with PRDM14. Interacts with RBPJ, GFI1, TCF4. Interacts with TAL1 and CBFA2T3/MTG16; the heteromer with CBFA2T3/MTG16 may function in repression of TAL1. As to expression, ubiquitously expressed in fetal and adult tissues. Highly expressed in adult brain, heart, lung, kidney, lymph node, appendix, thymus, testis, uterus, small intestine, prostate and thymus.

It localises to the nucleus. Functionally, transcriptional corepressor which facilitates transcriptional repression via its association with DNA-binding transcription factors and recruitment of other corepressors and histone-modifying enzymes. Via association with PRDM14 is involved in regulation of embryonic stem cell (ESC) pluripotency. Involved in primordial germ cell (PCG) formation. Stabilizes PRDM14 and OCT4 on chromatin in a homooligomerization-dependent manner. Can repress the expression of MMP7 in a ZBTB33-dependent manner. May function as a complex with the chimeric protein RUNX1/AML1-CBFA2T1/MTG8 (AML1-MTG8/ETO fusion protein) which is produced in acute myeloid leukemia with the chromosomal translocation t(8;21). May thus be involved in the repression of AML1-dependent transcription and the induction of G-CSF/CSF3-dependent cell growth. May be a tumor suppressor gene candidate involved in myeloid tumors with the deletion of the 20q11 region. Through heteromerization with CBFA2T3/MTG16 may be involved in regulation of the proliferation and the differentiation of erythroid progenitors by repressing the expression of TAL1 target genes. Required for the maintenance of the secretory cell lineage in the small intestine. Can inhibit Notch signaling probably by association with RBPJ and may be involved in GFI1-mediated Paneth cell differentiation. The chain is Protein CBFA2T2 (CBFA2T2) from Homo sapiens (Human).